We begin with the raw amino-acid sequence, 243 residues long: Carboxy-S-adenosyl-L-methionine synthase (243 aa).

Residues Tyr35, 68 to 70, 92 to 93, and Arg199 each bind S-adenosyl-L-methionine; these read GCS and DN.

This sequence belongs to the class I-like SAM-binding methyltransferase superfamily. Cx-SAM synthase family. Homodimer.

It carries out the reaction prephenate + S-adenosyl-L-methionine = carboxy-S-adenosyl-L-methionine + 3-phenylpyruvate + H2O. Catalyzes the conversion of S-adenosyl-L-methionine (SAM) to carboxy-S-adenosyl-L-methionine (Cx-SAM). This Helicobacter pylori (strain J99 / ATCC 700824) (Campylobacter pylori J99) protein is Carboxy-S-adenosyl-L-methionine synthase.